A 152-amino-acid chain; its full sequence is Transcriptional regulator MraZ (152 aa).

2 consecutive SpoVT-AbrB domains span residues 5-52 (ATLV…PLPA) and 81-124 (ASEC…DEQT).

This sequence belongs to the MraZ family. As to quaternary structure, forms oligomers.

It localises to the cytoplasm. The protein localises to the nucleoid. Functionally, negatively regulates its own expression and that of the subsequent genes in the proximal part of the division and cell wall (dcw) gene cluster. Acts by binding directly to DNA. May also regulate the expression of genes outside the dcw cluster. The chain is Transcriptional regulator MraZ from Sodalis glossinidius (strain morsitans).